The primary structure comprises 277 residues: Bis(5'-nucleosyl)-tetraphosphatase, symmetrical (277 aa).

The protein belongs to the Ap4A hydrolase family.

The catalysed reaction is P(1),P(4)-bis(5'-adenosyl) tetraphosphate + H2O = 2 ADP + 2 H(+). Hydrolyzes diadenosine 5',5'''-P1,P4-tetraphosphate to yield ADP. The sequence is that of Bis(5'-nucleosyl)-tetraphosphatase, symmetrical from Bordetella pertussis (strain Tohama I / ATCC BAA-589 / NCTC 13251).